The primary structure comprises 307 residues: Ribonuclease Z (307 aa).

7 residues coordinate Zn(2+): His63, His65, Asp67, His68, His141, Asp212, and His270. The Proton acceptor role is filled by Asp67.

The protein belongs to the RNase Z family. In terms of assembly, homodimer. It depends on Zn(2+) as a cofactor.

The enzyme catalyses Endonucleolytic cleavage of RNA, removing extra 3' nucleotides from tRNA precursor, generating 3' termini of tRNAs. A 3'-hydroxy group is left at the tRNA terminus and a 5'-phosphoryl group is left at the trailer molecule.. In terms of biological role, zinc phosphodiesterase, which displays some tRNA 3'-processing endonuclease activity. Probably involved in tRNA maturation, by removing a 3'-trailer from precursor tRNA. The polypeptide is Ribonuclease Z (Bacillus cereus (strain ATCC 10987 / NRS 248)).